The primary structure comprises 262 residues: Ribose-5-phosphate isomerase A (262 aa).

Substrate contacts are provided by residues 33-36 (TGST), 89-92 (DGAD), and 102-105 (KGGG). The active-site Proton acceptor is Glu111. Lys129 is a binding site for substrate.

It belongs to the ribose 5-phosphate isomerase family. In terms of assembly, homodimer.

It carries out the reaction aldehydo-D-ribose 5-phosphate = D-ribulose 5-phosphate. Its pathway is carbohydrate degradation; pentose phosphate pathway; D-ribose 5-phosphate from D-ribulose 5-phosphate (non-oxidative stage): step 1/1. Catalyzes the reversible conversion of ribose-5-phosphate to ribulose 5-phosphate. This chain is Ribose-5-phosphate isomerase A, found in Roseobacter denitrificans (strain ATCC 33942 / OCh 114) (Erythrobacter sp. (strain OCh 114)).